Reading from the N-terminus, the 421-residue chain is Testin (421 aa).

One can recognise a PET domain in the interval 92-199 (MILTNPVAAK…GDVKLPREMD (108 aa)). The segment at 134 to 164 (KQPVAGSEGAQYRKKQLAKQLPAHDQDPSKC) is disordered. Positions 155–164 (PAHDQDPSKC) are enriched in basic and acidic residues. LIM zinc-binding domains lie at 234 to 297 (YSCY…CDSE), 299 to 359 (PRCA…NHAV), and 362 to 421 (QGCH…KMMS).

It belongs to the prickle / espinas / testin family. In terms of assembly, interacts via LIM domain 1 with ZYX. Interacts (via LIM domain 3) with ENAH and VASP. Interacts with ALKBH4, talin, actin, alpha-actinin, GRIP1 and PXN. Interacts (via LIM domain 2) with ACTL7A (via N-terminus). Heterodimer with ACTL7A; the heterodimer interacts with ENAH to form a heterotrimer.

The protein localises to the cytoplasm. The protein resides in the cell junction. Its subcellular location is the focal adhesion. Scaffold protein that may play a role in cell adhesion, cell spreading and in the reorganization of the actin cytoskeleton. Plays a role in the regulation of cell proliferation. May act as a tumor suppressor. This chain is Testin (TES), found in Rhinolophus ferrumequinum (Greater horseshoe bat).